The primary structure comprises 139 residues: Small ribosomal subunit protein bS6 (139 aa).

Residues 97 to 139 (TEASPMAKAKDERDSRRSSEGERRSAPAEATEEVKETAEKAAE) form a disordered region. The segment covering 104–139 (KAKDERDSRRSSEGERRSAPAEATEEVKETAEKAAE) has biased composition (basic and acidic residues).

The protein belongs to the bacterial ribosomal protein bS6 family.

Its function is as follows. Binds together with bS18 to 16S ribosomal RNA. The polypeptide is Small ribosomal subunit protein bS6 (Shewanella sediminis (strain HAW-EB3)).